A 233-amino-acid chain; its full sequence is Fibroblast growth factor 8 (233 aa).

A signal peptide spans 1–22 (MGSPRSALSCLLLHLLVLCLQA). Asn-155 carries an N-linked (GlcNAc...) asparagine glycan.

This sequence belongs to the heparin-binding growth factors family. Monomer. Homodimer. Interacts with FGFR1, FGFR2, FGFR3 and FGFR4. Affinity between fibroblast growth factors (FGFs) and their receptors is increased by heparan sulfate glycosaminoglycans that function as coreceptors.

It localises to the secreted. In terms of biological role, plays an important role in the regulation of embryonic development, cell proliferation, cell differentiation and cell migration. Required for normal brain, eye, ear and limb development during embryogenesis. Required for normal development of the gonadotropin-releasing hormone (GnRH) neuronal system. Plays a role in neurite outgrowth in hippocampal cells. This Homo sapiens (Human) protein is Fibroblast growth factor 8 (FGF8).